The primary structure comprises 285 residues: Probable endonuclease 4 (285 aa).

The Zn(2+) site is built by H69, H109, E145, D179, H182, H216, D229, H231, and E261.

Belongs to the AP endonuclease 2 family. Zn(2+) serves as cofactor.

It catalyses the reaction Endonucleolytic cleavage to 5'-phosphooligonucleotide end-products.. In terms of biological role, endonuclease IV plays a role in DNA repair. It cleaves phosphodiester bonds at apurinic or apyrimidinic (AP) sites, generating a 3'-hydroxyl group and a 5'-terminal sugar phosphate. In Escherichia coli O81 (strain ED1a), this protein is Probable endonuclease 4.